The chain runs to 373 residues: Lipoyl amidotransferase LIPT1, mitochondrial (373 aa).

The transit peptide at 1–25 (MLIPFSMKNCFQLLCNCQVPAAGFK) directs the protein to the mitochondrion. Positions 57–243 (LEGKPILFFW…EYAAYHQIDN (187 aa)) constitute a BPL/LPL catalytic domain. Residues Tyr107, Arg151, Lys161, and Thr179 each coordinate (R)-lipoyl-5'-AMP.

It belongs to the LplA family. In terms of tissue distribution, highly expressed in skeletal muscle and heart, moderately in kidney and pancreas, and detected at lower levels in liver, brain, placenta and lung.

The protein resides in the mitochondrion. The catalysed reaction is N(6)-[(R)-lipoyl]-L-lysyl-[glycine-cleavage complex H protein] + L-lysyl-[lipoyl-carrier protein] = L-lysyl-[glycine-cleavage complex H protein] + N(6)-[(R)-lipoyl]-L-lysyl-[lipoyl-carrier protein]. It carries out the reaction (R)-lipoyl-5'-AMP + L-lysyl-[lipoyl-carrier protein] = N(6)-[(R)-lipoyl]-L-lysyl-[lipoyl-carrier protein] + AMP + 2 H(+). The protein operates within protein modification; protein lipoylation via exogenous pathway; protein N(6)-(lipoyl)lysine from lipoate: step 2/2. Lipoyl amidotransferase that catalyzes the transfer of lipoyl moieties from lipoyl-protein H of the glycine cleavage system (lipoyl-GCSH) to E2 subunits of the pyruvate dehydrogenase complex (PDCE2). Unable to catalyze the transfer of octanoyl from octanoyl-GCSH to PDCE2. In vitro, it is also able to catalyze the transfer of the lipoyl group from lipoyl-AMP to the specific lysine residue of lipoyl domains of lipoate-dependent enzymes but this reaction may not be physiologically relevant. The protein is Lipoyl amidotransferase LIPT1, mitochondrial of Homo sapiens (Human).